The sequence spans 316 residues: uncharacterized protein (316 aa).

4 helical membrane passes run 74 to 94, 99 to 119, 166 to 186, and 188 to 208; these read IPVL…GMAI, WPYA…IFLG, MAGC…TVLG, and VEGF…GYIF.

It is found in the cell membrane. This is an uncharacterized protein from Synechocystis sp. (strain ATCC 27184 / PCC 6803 / Kazusa).